The following is a 158-amino-acid chain: Transcription elongation factor GreA (158 aa).

Residues 4–75 (QKQYPMTQEG…QRVENMLRNA (72 aa)) are a coiled coil.

Belongs to the GreA/GreB family.

In terms of biological role, necessary for efficient RNA polymerase transcription elongation past template-encoded arresting sites. The arresting sites in DNA have the property of trapping a certain fraction of elongating RNA polymerases that pass through, resulting in locked ternary complexes. Cleavage of the nascent transcript by cleavage factors such as GreA or GreB allows the resumption of elongation from the new 3'terminus. GreA releases sequences of 2 to 3 nucleotides. The sequence is that of Transcription elongation factor GreA from Staphylococcus saprophyticus subsp. saprophyticus (strain ATCC 15305 / DSM 20229 / NCIMB 8711 / NCTC 7292 / S-41).